The primary structure comprises 170 residues: Adenine phosphoribosyltransferase (170 aa).

Belongs to the purine/pyrimidine phosphoribosyltransferase family. As to quaternary structure, homodimer.

It is found in the cytoplasm. The enzyme catalyses AMP + diphosphate = 5-phospho-alpha-D-ribose 1-diphosphate + adenine. Its pathway is purine metabolism; AMP biosynthesis via salvage pathway; AMP from adenine: step 1/1. Functionally, catalyzes a salvage reaction resulting in the formation of AMP, that is energically less costly than de novo synthesis. The chain is Adenine phosphoribosyltransferase from Bacillus pumilus (strain SAFR-032).